Consider the following 429-residue polypeptide: Adenylosuccinate synthetase (429 aa).

GTP-binding positions include 12 to 18 and 40 to 42; these read GDEGKGK and GHT. Asp13 (proton acceptor) is an active-site residue. Mg(2+)-binding residues include Asp13 and Gly40. IMP-binding positions include 13-16, 38-41, Thr128, Arg142, Gln223, Thr238, and Arg302; these read DEGK and NAGH. Residue His41 is the Proton donor of the active site. A substrate-binding site is contributed by 298–304; sequence VNTGRPR. GTP-binding positions include Arg304, 330 to 332, and 412 to 414; these read KLD and GVG.

It belongs to the adenylosuccinate synthetase family. Homodimer. The cofactor is Mg(2+).

Its subcellular location is the cytoplasm. The enzyme catalyses IMP + L-aspartate + GTP = N(6)-(1,2-dicarboxyethyl)-AMP + GDP + phosphate + 2 H(+). It functions in the pathway purine metabolism; AMP biosynthesis via de novo pathway; AMP from IMP: step 1/2. Its function is as follows. Plays an important role in the de novo pathway of purine nucleotide biosynthesis. Catalyzes the first committed step in the biosynthesis of AMP from IMP. This Renibacterium salmoninarum (strain ATCC 33209 / DSM 20767 / JCM 11484 / NBRC 15589 / NCIMB 2235) protein is Adenylosuccinate synthetase.